Consider the following 306-residue polypeptide: Mitochondrial glycine transporter (306 aa).

Solcar repeat units lie at residues 25-114 (QPVI…LKQY), 121-205 (PTAL…TKNV), and 217-301 (LVPV…MMAK). A run of 6 helical transmembrane segments spans residues 31-56 (FLCGSISGTCSTVLFQPLDLLKTRLQ), 89-115 (GMSPSIVRCVPGVGIYFGTLYSLKQYF), 127-152 (VILGAGSRSVAGVCMSPITVIKTRYE), 180-203 (GLTATLLRDAPFSGIYLMFYSQTK), 221-247 (VNFSCGIFAGILASLVTQPADVIKTHM), and 276-294 (GSVPRALRRTLVAAMAWTV).

The protein belongs to the mitochondrial carrier (TC 2.A.29) family. SLC25A38 subfamily.

The protein resides in the mitochondrion inner membrane. The enzyme catalyses glycine(in) = glycine(out). Functionally, mitochondrial glycine transporter that imports glycine into the mitochondrial matrix. Plays an important role in providing glycine for the first enzymatic step in heme biosynthesis, the condensation of glycine with succinyl-CoA to produce 5-aminolevulinate (ALA) in the mitochondrial matrix. Required during erythropoiesis. In terms of biological role, plays a role as pro-apoptotic protein that induces caspase-dependent apoptosis. The polypeptide is Mitochondrial glycine transporter (Ovis aries (Sheep)).